A 550-amino-acid polypeptide reads, in one-letter code: Glucose-6-phosphate isomerase (550 aa).

Catalysis depends on Glu-356, which acts as the Proton donor. Residues His-387 and Lys-515 contribute to the active site.

It belongs to the GPI family.

Its subcellular location is the cytoplasm. It catalyses the reaction alpha-D-glucose 6-phosphate = beta-D-fructose 6-phosphate. It participates in carbohydrate biosynthesis; gluconeogenesis. It functions in the pathway carbohydrate degradation; glycolysis; D-glyceraldehyde 3-phosphate and glycerone phosphate from D-glucose: step 2/4. Its function is as follows. Catalyzes the reversible isomerization of glucose-6-phosphate to fructose-6-phosphate. The polypeptide is Glucose-6-phosphate isomerase (Vibrio campbellii (strain ATCC BAA-1116)).